Reading from the N-terminus, the 118-residue chain is Small ribosomal subunit protein uS13 (118 aa).

Residues 94–118 (SLPLRGQRTKTNARTRKGPRKPIRK) are disordered.

This sequence belongs to the universal ribosomal protein uS13 family. As to quaternary structure, part of the 30S ribosomal subunit. Forms a loose heterodimer with protein S19. Forms two bridges to the 50S subunit in the 70S ribosome.

Its function is as follows. Located at the top of the head of the 30S subunit, it contacts several helices of the 16S rRNA. In the 70S ribosome it contacts the 23S rRNA (bridge B1a) and protein L5 of the 50S subunit (bridge B1b), connecting the 2 subunits; these bridges are implicated in subunit movement. Contacts the tRNAs in the A and P-sites. This is Small ribosomal subunit protein uS13 from Shewanella baltica (strain OS223).